The primary structure comprises 1022 residues: MGDFVEDFVRYLKEIAAKWREEWERARLHEADVDPNRPKFYVTAAFPYPNSPMHLGHSRTYSVTDAYARFKRMRGFNVLFPMGFHYTGTPIIAMSEKVKQGLQALRSLGEVKTILEEIWKIKVERNLSIGEAIKEYLRGAGREDLMDKTDSIEYLVLFYKVFEIPVEDLEKLTEPLSMANYFASITEEGMKELGYMIDWRRKFTTVDPDFQKFITWQFLKLYDLGYVEKGTHPVAWDPVYDTPVSQHDTKGDVEPEIEEYDVILFKLKDEDLYLPAATLRAETVFGVTNVWLNPEAEYEVVEVDGKRWVLSKKAAYKIKFQKDEVKSLGPIDPKKLLKKMVINPATEEEVPVLPARFVDPNVATGVVMSVPAHAPFDYVALKELEGDPEYSDIVKSIELVQVIRVPEEGLLVPQLVEKLGIRDTSDKKKLEEATREVYSKEYRKGRMLESVLERVKGDERLRAALKAFLGNDPVPDAREKTAKWLKLFGAGDVFYEIKNAPVYSRFGNEVVVKVLKDQWFLNYGDPQWKELARKALARMRIIPENFLKEFEDTIDWLQKRACARTRGLGTPLPWDKRWIIESLSDSTIYMAFYTVVNILRGASVEPEKLQPEVWDYIMLGKGNPKELEEKYGISAAVLEEARRSFDYWYPVDSRHSGKDLIRNHLTFFIFNHAAIFPEDKWPRQIVVNGFVNLEGKKMSKSLGNIIPITVAIRSFAPDIIRLVLLHSAELGSDADFRTEMVSRAISNLREIKSIVEKVKDYNGPRPANLTMLDAWYLSSFVKDVENVTNMMEDLKIREVTNVLYFILLNRTKEYLNALEAMGRGLDEVAKWVLRYTVERWVKMMTPFTPFFAEEMWHELGFNTFVVTEPWPVKDEELVNPLAEAAKEYVEKVIEDIKEIIKVAKIEKPKKVRIEVASPEQVKMLKMAVEFVNSGKSLREFMAEATKVFGKKEAKSLRQAFERATSLSESMRSVIARGEFDEKAVLEEFKRLIEEEVGSEVEIRRYEGGKKRPEPLRPAIYVE.

Residues 47-57 carry the 'HIGH' region motif; it reads PYPNSPMHLGH. A 'KMSKS' region motif is present at residues 697-701; that stretch reads KMSKS. Position 700 (K700) interacts with ATP.

Belongs to the class-I aminoacyl-tRNA synthetase family.

The protein resides in the cytoplasm. It catalyses the reaction tRNA(Leu) + L-leucine + ATP = L-leucyl-tRNA(Leu) + AMP + diphosphate. In Ignicoccus hospitalis (strain KIN4/I / DSM 18386 / JCM 14125), this protein is Leucine--tRNA ligase.